The primary structure comprises 594 residues: Elongation factor 4 (594 aa).

Residues 2 to 184 form the tr-type G domain; that stretch reads KNIRNFSIIA…TIVAKVPAPE (183 aa). GTP is bound by residues 14 to 19 and 131 to 134; these read DHGKST and NKID.

This sequence belongs to the TRAFAC class translation factor GTPase superfamily. Classic translation factor GTPase family. LepA subfamily.

The protein resides in the cell inner membrane. The catalysed reaction is GTP + H2O = GDP + phosphate + H(+). In terms of biological role, required for accurate and efficient protein synthesis under certain stress conditions. May act as a fidelity factor of the translation reaction, by catalyzing a one-codon backward translocation of tRNAs on improperly translocated ribosomes. Back-translocation proceeds from a post-translocation (POST) complex to a pre-translocation (PRE) complex, thus giving elongation factor G a second chance to translocate the tRNAs correctly. Binds to ribosomes in a GTP-dependent manner. This Francisella philomiragia subsp. philomiragia (strain ATCC 25017 / CCUG 19701 / FSC 153 / O#319-036) protein is Elongation factor 4.